Reading from the N-terminus, the 266-residue chain is Ras-like protein family member 12 (266 aa).

GTP-binding positions include 27-34 (GRRGAGKS), 74-78 (DTADL), and 134-137 (NKLD).

Belongs to the small GTPase superfamily. Ras family.

The catalysed reaction is GTP + H2O = GDP + phosphate + H(+). The chain is Ras-like protein family member 12 (RASL12) from Homo sapiens (Human).